Here is a 661-residue protein sequence, read N- to C-terminus: Transmembrane and coiled-coil domain-containing protein STS1 (661 aa).

2 disordered regions span residues 34–71 (AHHHHDDDDEEQGRTSTSSGGGGGSSSSSSNSGAGADA) and 154–185 (VGNTIKGGDQDALPSSSGTDKSPGESSHDDQL). Residues 59-69 (SSSSSNSGAGA) show a composition bias toward low complexity. Positions 175–184 (SPGESSHDDQ) are enriched in basic and acidic residues. A run of 4 helical transmembrane segments spans residues 306–326 (ALLAITGGLAAPAIAAGFGAL), 333–353 (LVPVIGASGFAAMATAAGSVA), 355–375 (SVAVAASFGAAGAGLTGSKMA), and 466–486 (LSGLLAAFAWPATLLAATDFI).

This sequence belongs to the TMCO4 family. As to quaternary structure, interacts with PKS10/PKS2 and 4CLL9/ACOS12.

Its subcellular location is the endoplasmic reticulum membrane. In terms of biological role, involved in anther lipids biosynthesis and is required for tapetum degradation and pollen wall formation. Required for the formation of Ubisch bodies and microspores. Possesses lipase activity in vitro toward two synthetic substrates, p-nitrophenyl acetate (pNPA) and p-nitrophenyl butyrate (pNPB). The polypeptide is Transmembrane and coiled-coil domain-containing protein STS1 (Oryza sativa subsp. japonica (Rice)).